Consider the following 194-residue polypeptide: Putative 3-methyladenine DNA glycosylase (194 aa).

It belongs to the DNA glycosylase MPG family.

The protein is Putative 3-methyladenine DNA glycosylase of Mycolicibacterium fortuitum (Mycobacterium fortuitum).